Here is a 315-residue protein sequence, read N- to C-terminus: Acetyl-coenzyme A carboxylase carboxyl transferase subunit alpha (315 aa).

The region spanning 38-292 (RLQKKSNELT…KLRLKEDLAE (255 aa)) is the CoA carboxyltransferase C-terminal domain.

Belongs to the AccA family. Acetyl-CoA carboxylase is a heterohexamer composed of biotin carboxyl carrier protein (AccB), biotin carboxylase (AccC) and two subunits each of ACCase subunit alpha (AccA) and ACCase subunit beta (AccD).

It is found in the cytoplasm. The catalysed reaction is N(6)-carboxybiotinyl-L-lysyl-[protein] + acetyl-CoA = N(6)-biotinyl-L-lysyl-[protein] + malonyl-CoA. The protein operates within lipid metabolism; malonyl-CoA biosynthesis; malonyl-CoA from acetyl-CoA: step 1/1. In terms of biological role, component of the acetyl coenzyme A carboxylase (ACC) complex. First, biotin carboxylase catalyzes the carboxylation of biotin on its carrier protein (BCCP) and then the CO(2) group is transferred by the carboxyltransferase to acetyl-CoA to form malonyl-CoA. This chain is Acetyl-coenzyme A carboxylase carboxyl transferase subunit alpha, found in Haemophilus influenzae (strain 86-028NP).